We begin with the raw amino-acid sequence, 321 residues long: uncharacterized protein (321 aa).

Tyrosine 60 (proton donor) is an active-site residue. Residue histidine 118 coordinates substrate.

The protein belongs to the aldo/keto reductase family.

This is an uncharacterized protein from Schizosaccharomyces pombe (strain 972 / ATCC 24843) (Fission yeast).